A 373-amino-acid chain; its full sequence is Histidinol-phosphate aminotransferase (373 aa).

An N6-(pyridoxal phosphate)lysine modification is found at K233.

It belongs to the class-II pyridoxal-phosphate-dependent aminotransferase family. Histidinol-phosphate aminotransferase subfamily. Homodimer. Pyridoxal 5'-phosphate serves as cofactor.

The catalysed reaction is L-histidinol phosphate + 2-oxoglutarate = 3-(imidazol-4-yl)-2-oxopropyl phosphate + L-glutamate. It functions in the pathway amino-acid biosynthesis; L-histidine biosynthesis; L-histidine from 5-phospho-alpha-D-ribose 1-diphosphate: step 7/9. The protein is Histidinol-phosphate aminotransferase of Nitratidesulfovibrio vulgaris (strain ATCC 29579 / DSM 644 / CCUG 34227 / NCIMB 8303 / VKM B-1760 / Hildenborough) (Desulfovibrio vulgaris).